A 571-amino-acid polypeptide reads, in one-letter code: Proline--tRNA ligase (571 aa).

This sequence belongs to the class-II aminoacyl-tRNA synthetase family. ProS type 1 subfamily. In terms of assembly, homodimer.

The protein resides in the cytoplasm. The enzyme catalyses tRNA(Pro) + L-proline + ATP = L-prolyl-tRNA(Pro) + AMP + diphosphate. Catalyzes the attachment of proline to tRNA(Pro) in a two-step reaction: proline is first activated by ATP to form Pro-AMP and then transferred to the acceptor end of tRNA(Pro). As ProRS can inadvertently accommodate and process non-cognate amino acids such as alanine and cysteine, to avoid such errors it has two additional distinct editing activities against alanine. One activity is designated as 'pretransfer' editing and involves the tRNA(Pro)-independent hydrolysis of activated Ala-AMP. The other activity is designated 'posttransfer' editing and involves deacylation of mischarged Ala-tRNA(Pro). The misacylated Cys-tRNA(Pro) is not edited by ProRS. The chain is Proline--tRNA ligase from Vibrio vulnificus (strain YJ016).